We begin with the raw amino-acid sequence, 453 residues long: Aspartate aminotransferase, chloroplastic (453 aa).

The transit peptide at 1-44 directs the protein to the chloroplast; that stretch reads MASLMLSLGSTSLLPREINKDKLKLGTSASNPFLKAKSFSRVTM. The L-aspartate site is built by glycine 85, tryptophan 181, and asparagine 234. Lysine 298 carries the N6-(pyridoxal phosphate)lysine modification. Arginine 427 provides a ligand contact to L-aspartate.

This sequence belongs to the class-I pyridoxal-phosphate-dependent aminotransferase family. In terms of assembly, homodimer. It depends on pyridoxal 5'-phosphate as a cofactor.

The protein resides in the plastid. Its subcellular location is the chloroplast. It localises to the amyloplast. The catalysed reaction is L-aspartate + 2-oxoglutarate = oxaloacetate + L-glutamate. Amino acid aminotransferase important for the metabolism of amino acids and Krebs-cycle related organic acids. No activity with D-Asp or D-Ala as amino donors. In plants, it is involved in nitrogen metabolism and in aspects of carbon and energy metabolism. This is Aspartate aminotransferase, chloroplastic (ASP5) from Arabidopsis thaliana (Mouse-ear cress).